The chain runs to 74 residues: MSKKEMILSWKNPMYRTESSYHPAGNILKELQEEEQHSIAGGTITLSTCAILSKPLGNNGYLCTVTKECMPSCN.

Positions 1-42 (MSKKEMILSWKNPMYRTESSYHPAGNILKELQEEEQHSIAGG) are excised as a propeptide. The residue at position 43 (Thr-43) is a 2-oxobutanoic acid. The beta-methyllanthionine (Thr-Cys) cross-link spans 45-49 (TLSTC). 2,3-didehydroalanine (Ser) is present on Ser-47. Position 48 is a (Z)-2,3-didehydrobutyrine (Thr-48). Positions 53 to 63 (SKPLGNNGYLC) form a cross-link, lanthionine (Ser-Cys). 2 consecutive cross-links (beta-methyllanthionine (Thr-Cys)) follow at residues 64–69 (TVTKEC) and 66–73 (TKECMPSC).

In terms of processing, maturation of lantibiotics involves the enzymatic conversion of Thr, and Ser into dehydrated AA and the formation of thioether bonds with cysteine. This is followed by membrane translocation and cleavage of the modified precursor.

It is found in the secreted. Its subcellular location is the cell wall. Functionally, lanthionine-containing peptide antibiotic (lantibiotic) active on Gram-positive bacteria. The bactericidal activity of lantibiotics is based on depolarization of energized bacterial cytoplasmic membranes, initiated by the formation of aqueous transmembrane pores. When present individually, LchA1 exhibits activity towards L.lactis HP. When combined with LchA2, it displays activity towards a broad spectrum of non-pathogenic and pathogenic Gram-positive bacteria including strains of L.monocytogenes, methicillin-resistant S.aureus, S.pneumoniae and strains of vancomycin-resistant enterococci, but not towards E.faecium L4001 and BM4147-1. Combined LchA1 and LchA2 peptides also inhibit Bacillus sp. HIL-Y85/54728, L.lactis DPC3417 and B.halodurans C-125, which produce lantibiotics themselves. Inactivated by proteinase K and pronase E, but not by trypsin and chymotrypsin. The sequence is that of Lantibiotic lichenicidin A1 from Bacillus licheniformis (strain ATCC 14580 / DSM 13 / JCM 2505 / CCUG 7422 / NBRC 12200 / NCIMB 9375 / NCTC 10341 / NRRL NRS-1264 / Gibson 46).